The primary structure comprises 154 residues: Prefoldin subunit alpha (154 aa).

The disordered stretch occupies residues 123-154; the sequence is EAEQLEQQAQQAQQQMMQQQMQAQQQPQDGEQ. The segment covering 127-154 has biased composition (low complexity); it reads LEQQAQQAQQQMMQQQMQAQQQPQDGEQ.

It belongs to the prefoldin alpha subunit family. As to quaternary structure, heterohexamer of two alpha and four beta subunits.

It is found in the cytoplasm. Its function is as follows. Molecular chaperone capable of stabilizing a range of proteins. Seems to fulfill an ATP-independent, HSP70-like function in archaeal de novo protein folding. The polypeptide is Prefoldin subunit alpha (Halobacterium salinarum (strain ATCC 29341 / DSM 671 / R1)).